The chain runs to 190 residues: DNA-invertase (190 aa).

Residues 2–135 form the Resolvase/invertase-type recombinase catalytic domain; it reads ATIGYIRVST…AGLAAARAQG (134 aa). Serine 10 functions as the O-(5'-phospho-DNA)-serine intermediate in the catalytic mechanism. The segment at residues 162–181 is a DNA-binding region (H-T-H motif); the sequence is RQQLAIIFGIGVSTLYRYFP.

Belongs to the site-specific recombinase resolvase family.

Functionally, a DNA fragment of approximately 900 base pairs, adjacent to the fljB (H2) gene, which specifies the synthesis of phase-2 flagellin, can exist in either orientation with respect to fljB. The orientation of the inversion region controls expression of fljB. The hin gene occupies about two-thirds of the inversion region; it is required for the inversion of the fljB controlling region. This Salmonella abortus-equi protein is DNA-invertase (hin).